The sequence spans 1090 residues: UPF0507 protein SCY_4172 (1090 aa).

The VPS9 domain maps to 289 to 436; that stretch reads FSVNQLLTDF…FEDFNKNTGN (148 aa).

Belongs to the UPF0507 family.

This chain is UPF0507 protein SCY_4172, found in Saccharomyces cerevisiae (strain YJM789) (Baker's yeast).